Reading from the N-terminus, the 290-residue chain is Nucleotide-binding protein FN1089 (290 aa).

ATP is bound at residue 11–18; the sequence is GLSGAGKT. 56-59 contributes to the GTP binding site; it reads DIRT.

Belongs to the RapZ-like family.

Displays ATPase and GTPase activities. The protein is Nucleotide-binding protein FN1089 of Fusobacterium nucleatum subsp. nucleatum (strain ATCC 25586 / DSM 15643 / BCRC 10681 / CIP 101130 / JCM 8532 / KCTC 2640 / LMG 13131 / VPI 4355).